A 276-amino-acid chain; its full sequence is Dermonecrotic toxin LlSicTox-alphaIV3 (276 aa).

His-5 is an active-site residue. Mg(2+) is bound by residues Glu-25 and Asp-27. The active-site Nucleophile is His-41. 2 disulfides stabilise this stretch: Cys-45/Cys-51 and Cys-47/Cys-192. Mg(2+) is bound at residue Asp-85.

Belongs to the arthropod phospholipase D family. Class II subfamily. It depends on Mg(2+) as a cofactor. Expressed by the venom gland.

It localises to the secreted. It catalyses the reaction an N-(acyl)-sphingosylphosphocholine = an N-(acyl)-sphingosyl-1,3-cyclic phosphate + choline. It carries out the reaction an N-(acyl)-sphingosylphosphoethanolamine = an N-(acyl)-sphingosyl-1,3-cyclic phosphate + ethanolamine. The catalysed reaction is a 1-acyl-sn-glycero-3-phosphocholine = a 1-acyl-sn-glycero-2,3-cyclic phosphate + choline. The enzyme catalyses a 1-acyl-sn-glycero-3-phosphoethanolamine = a 1-acyl-sn-glycero-2,3-cyclic phosphate + ethanolamine. Its function is as follows. Dermonecrotic toxins cleave the phosphodiester linkage between the phosphate and headgroup of certain phospholipids (sphingolipid and lysolipid substrates), forming an alcohol (often choline) and a cyclic phosphate. This toxin acts on sphingomyelin (SM). It may also act on ceramide phosphoethanolamine (CPE), lysophosphatidylcholine (LPC) and lysophosphatidylethanolamine (LPE), but not on lysophosphatidylserine (LPS), and lysophosphatidylglycerol (LPG). It acts by transphosphatidylation, releasing exclusively cyclic phosphate products as second products. Induces dermonecrosis, hemolysis, increased vascular permeability, edema, inflammatory response, and platelet aggregation. The polypeptide is Dermonecrotic toxin LlSicTox-alphaIV3 (Loxosceles laeta (South American recluse spider)).